The primary structure comprises 45 residues: Mu-conotoxin-like Cal 12.1.2g (45 aa).

4 cysteine pairs are disulfide-bonded: Cys-3/Cys-16, Cys-11/Cys-28, Cys-18/Cys-33, and Cys-27/Cys-39. Position 23 is a 4-hydroxyproline (Pro-23). 6'-bromotryptophan is present on residues Trp-37 and Trp-38. At Pro-40 the chain carries 4-hydroxyproline.

In terms of tissue distribution, expressed by the venom duct.

The protein resides in the secreted. Its function is as follows. Mu-conotoxins block voltage-gated sodium channels. This toxin reversibly blocks voltage-gated sodium channel in cephalopods, with no alteration in the voltage dependence of sodium conductance or on the kinetics of inactivation. The polypeptide is Mu-conotoxin-like Cal 12.1.2g (Californiconus californicus (California cone)).